The primary structure comprises 266 residues: Imidazole glycerol phosphate synthase subunit HisF (266 aa).

Residues aspartate 11 and aspartate 130 contribute to the active site.

It belongs to the HisA/HisF family. As to quaternary structure, heterodimer of HisH and HisF.

It localises to the cytoplasm. The enzyme catalyses 5-[(5-phospho-1-deoxy-D-ribulos-1-ylimino)methylamino]-1-(5-phospho-beta-D-ribosyl)imidazole-4-carboxamide + L-glutamine = D-erythro-1-(imidazol-4-yl)glycerol 3-phosphate + 5-amino-1-(5-phospho-beta-D-ribosyl)imidazole-4-carboxamide + L-glutamate + H(+). The protein operates within amino-acid biosynthesis; L-histidine biosynthesis; L-histidine from 5-phospho-alpha-D-ribose 1-diphosphate: step 5/9. IGPS catalyzes the conversion of PRFAR and glutamine to IGP, AICAR and glutamate. The HisF subunit catalyzes the cyclization activity that produces IGP and AICAR from PRFAR using the ammonia provided by the HisH subunit. The sequence is that of Imidazole glycerol phosphate synthase subunit HisF from Nitrosopumilus maritimus (strain SCM1).